The sequence spans 530 residues: Purine-cytosine permease FCY22 (530 aa).

Position 46 is a phosphothreonine (T46). 12 helical membrane-spanning segments follow: residues 96 to 116 (MVIV…LNFG), 119 to 139 (VLVI…FSLF), 162 to 182 (FFSL…ISVS), 197 to 217 (CPIW…TFFG), 220 to 240 (VVHA…LVII), 263 to 283 (GVLS…TYAA), 298 to 318 (IFFS…ILGA), 345 to 365 (AILV…LLAL), 372 to 392 (VPGM…LAKI), 396 to 416 (VWTM…TYYF), 418 to 438 (GFME…IAIA), and 463 to 483 (LPIG…VALG).

The protein belongs to the purine-cytosine permease (2.A.39) family.

It is found in the membrane. Probable purine-cytosine permease. This chain is Purine-cytosine permease FCY22 (FCY22), found in Saccharomyces cerevisiae (strain ATCC 204508 / S288c) (Baker's yeast).